A 233-amino-acid polypeptide reads, in one-letter code: uncharacterized protein (233 aa).

A helical transmembrane segment spans residues 21-41 (LNILIAIVSILIVVVAANLFI). Residues 44 to 163 (PSSKDVSKDS…GEHAATYDSS (120 aa)) are disordered. 3 stretches are compositionally biased toward basic and acidic residues: residues 48 to 57 (DVSKDSETAQ), 66 to 108 (KTEK…KKDD), and 135 to 144 (DVEKTYENPD).

The protein resides in the cell membrane. This is an uncharacterized protein from Bacillus subtilis (strain 168).